A 107-amino-acid chain; its full sequence is Antimicrobial peptide damicornin (107 aa).

Positions 1-22 (MKVLVILFGAMLVLMEFQKASA) are cleaved as a signal peptide. Positions 23–67 (ATLLEDFDDDDDLLDDGGDFDLEANSDASSGNGNDSNDAVPEKRR) are excised as a propeptide. Residues 37–46 (DDGGDFDLEA) show a composition bias toward acidic residues. The disordered stretch occupies residues 37–62 (DDGGDFDLEANSDASSGNGNDSNDAV). The segment covering 47 to 61 (NSDASSGNGNDSNDA) has biased composition (low complexity). Cystine bridges form between Cys69/Cys105, Cys78/Cys99, and Cys85/Cys103. The residue at position 106 (Arg106) is an Arginine amide.

The protein belongs to the coral AMP family. As to expression, is specifically expressed in the granular cells of the ectoderm.

It localises to the cytoplasm. It is found in the stress granule. The protein resides in the secreted. In terms of biological role, cationic peptide with probable antimicrobial activity against coral pathogens. Shows in vitro activity against Gram-positive bacteria and the filamentous fungus F.oxysporum (MIC=1.25 uM). Gram-positive bacteria tested are B.megaterium (MIC=20 uM), S.aureus (MIC=5 uM), M. luteus (MIC=1.25 uM), B.stationis (MIC=10 uM), M.maritypicum (MIC=20 uM). Has no or little effect against Gram-negative bacteria (the coral pathogen V.coralliilyticus (MIC&gt;20 uM), V.aesturianus (MIC&gt;20 uM), V.shiloi (MIC&gt;20 uM), and E.coli (MIC=10 uM)). Has no hemolytic activity against sheep erythrocytes. This is Antimicrobial peptide damicornin from Pocillopora damicornis (Cauliflower coral).